A 1770-amino-acid chain; its full sequence is Transposon Ty2-GR1 Gag-Pol polyprotein (1770 aa).

3 stretches are compositionally biased toward polar residues: residues 1–11 (MESQQLHQNPH), 19–39 (ASVT…SASN), and 49–60 (KVNSQQETTPGT). Disordered stretches follow at residues 1-86 (MESQ…GQYQ) and 360-453 (HSEY…LPDH). Residues 295–397 (ENNINVSDRL…SSKPRAAKAH (103 aa)) form an RNA-binding region. The segment covering 369-381 (TSPNTTNTKVTTR) has biased composition (low complexity). The span at 399 to 408 (IATSSKFSRV) shows a compositional bias: polar residues. Asp-457 functions as the For protease activity; shared with dimeric partner in the catalytic mechanism. The segment at 579–636 (NVNKSKSVNKYPYPLIHRMLGHANFRSIQKSLKKNAVTYLKESDIEWSNASTYQCPDC) is integrase-type zinc finger-like. One can recognise an Integrase catalytic domain in the interval 656 to 831 (ESYEPFQYLH…AGLDITTILP (176 aa)). Mg(2+) contacts are provided by Asp-667 and Asp-732. 4 disordered regions span residues 1004–1034 (MGGT…STNE), 1059–1135 (TEEP…KSSK), 1146–1165 (LPLP…VSKD), and 1170–1205 (HSRQ…TEIE). Composition is skewed to polar residues over residues 1009 to 1034 (ESDT…STNE) and 1065 to 1082 (QRNS…STPS). Over residues 1151–1165 (LTHKSPTDTSDVSKD) the composition is skewed to basic and acidic residues. Residues 1193–1227 (KKRSLEDNETEIEVSRDTWNNKNMRSLEPPRSKKR) carry the Bipartite nuclear localization signal motif. In terms of domain architecture, Reverse transcriptase Ty1/copia-type spans 1353–1491 (NDYYITQLDI…DILGLEIKYQ (139 aa)). Mg(2+) contacts are provided by Asp-1361, Asp-1442, Asp-1443, Asp-1625, Glu-1667, and Asp-1700. The RNase H Ty1/copia-type domain occupies 1625-1767 (DASYGNQPYY…IKTFKLLTNK (143 aa)).

The capsid protein forms a homotrimer, from which the VLPs are assembled. The protease is a homodimer, whose active site consists of two apposed aspartic acid residues. Initially, virus-like particles (VLPs) are composed of the structural unprocessed proteins Gag and Gag-Pol, and also contain the host initiator methionine tRNA (tRNA(i)-Met) which serves as a primer for minus-strand DNA synthesis, and a dimer of genomic Ty RNA. Processing of the polyproteins occurs within the particle and proceeds by an ordered pathway, called maturation. First, the protease (PR) is released by autocatalytic cleavage of the Gag-Pol polyprotein, and this cleavage is a prerequisite for subsequent processing at the remaining sites to release the mature structural and catalytic proteins. Maturation takes place prior to the RT reaction and is required to produce transposition-competent VLPs.

Its subcellular location is the cytoplasm. It is found in the nucleus. It carries out the reaction DNA(n) + a 2'-deoxyribonucleoside 5'-triphosphate = DNA(n+1) + diphosphate. It catalyses the reaction Endonucleolytic cleavage to 5'-phosphomonoester.. In terms of biological role, capsid protein (CA) is the structural component of the virus-like particle (VLP), forming the shell that encapsulates the retrotransposons dimeric RNA genome. The particles are assembled from trimer-clustered units and there are holes in the capsid shells that allow for the diffusion of macromolecules. CA also has nucleocapsid-like chaperone activity, promoting primer tRNA(i)-Met annealing to the multipartite primer-binding site (PBS), dimerization of Ty2 RNA and initiation of reverse transcription. The aspartyl protease (PR) mediates the proteolytic cleavages of the Gag and Gag-Pol polyproteins after assembly of the VLP. Its function is as follows. Reverse transcriptase/ribonuclease H (RT) is a multifunctional enzyme that catalyzes the conversion of the retro-elements RNA genome into dsDNA within the VLP. The enzyme displays a DNA polymerase activity that can copy either DNA or RNA templates, and a ribonuclease H (RNase H) activity that cleaves the RNA strand of RNA-DNA heteroduplexes during plus-strand synthesis and hydrolyzes RNA primers. The conversion leads to a linear dsDNA copy of the retrotransposon that includes long terminal repeats (LTRs) at both ends. Functionally, integrase (IN) targets the VLP to the nucleus, where a subparticle preintegration complex (PIC) containing at least integrase and the newly synthesized dsDNA copy of the retrotransposon must transit the nuclear membrane. Once in the nucleus, integrase performs the integration of the dsDNA into the host genome. The polypeptide is Transposon Ty2-GR1 Gag-Pol polyprotein (TY2B-GR1) (Saccharomyces cerevisiae (strain ATCC 204508 / S288c) (Baker's yeast)).